Reading from the N-terminus, the 132-residue chain is uncharacterized protein (132 aa).

A run of 2 helical transmembrane segments spans residues 12 to 32 (VIGFVVLFCVLELVFYLKKLY) and 37 to 57 (LTLAVFGIFSLLFFLLYIPVL).

The protein resides in the cell membrane. This is an uncharacterized protein from Methanocaldococcus jannaschii (strain ATCC 43067 / DSM 2661 / JAL-1 / JCM 10045 / NBRC 100440) (Methanococcus jannaschii).